We begin with the raw amino-acid sequence, 276 residues long: Non-heme chloroperoxidase (276 aa).

In terms of domain architecture, AB hydrolase-1 spans 24-254; it reads PVVFHHGWPL…NATLKSYEGL (231 aa). Catalysis depends on residues Ser-97, Asp-227, and His-256.

Belongs to the AB hydrolase superfamily. Bacterial non-heme haloperoxidase / perhydrolase family. As to quaternary structure, homodimer.

This is Non-heme chloroperoxidase (cpo) from Streptomyces lividans.